We begin with the raw amino-acid sequence, 116 residues long: Ribonuclease P protein component (116 aa).

The protein belongs to the RnpA family. As to quaternary structure, consists of a catalytic RNA component (M1 or rnpB) and a protein subunit.

The enzyme catalyses Endonucleolytic cleavage of RNA, removing 5'-extranucleotides from tRNA precursor.. In terms of biological role, RNaseP catalyzes the removal of the 5'-leader sequence from pre-tRNA to produce the mature 5'-terminus. It can also cleave other RNA substrates such as 4.5S RNA. The protein component plays an auxiliary but essential role in vivo by binding to the 5'-leader sequence and broadening the substrate specificity of the ribozyme. In Lachnoclostridium phytofermentans (strain ATCC 700394 / DSM 18823 / ISDg) (Clostridium phytofermentans), this protein is Ribonuclease P protein component.